An 841-amino-acid polypeptide reads, in one-letter code: Putative helicase R592 (841 aa).

A Helicase ATP-binding domain is found at 72–309; it reads STFVIETNSA…RRYVNKIFGQ (238 aa). Position 85–92 (85–92) interacts with ATP; it reads DKVGAGKT. The segment covering 195–205 has biased composition (basic residues); sequence KLPVKTTKKGG. Residues 195–215 are disordered; the sequence is KLPVKTTKKGGSKTQNKAQND. Residues 206 to 215 show a composition bias toward polar residues; the sequence is SKTQNKAQND. The DEAD box signature appears at 266–269; the sequence is DEMD. The stretch at 413–450 forms a coiled coil; the sequence is QDVDAHENRKKNIMNNIARCKTKLESIKEKINSIKDEC. Residues 451–491 form an RING-type; degenerate zinc finger; that stretch reads CFICTDPFENPTIMNCCKSIFCLKCLLTTLKTVGSKCPYCR. One can recognise a Helicase C-terminal domain in the interval 531 to 682; the sequence is VLEQVLSYIS…WMITNPTDLN (152 aa). Positions 678–841 are disordered; the sequence is PTDLNEEPDE…KAPVRKLIKV (164 aa). Positions 681 to 697 are enriched in acidic residues; that stretch reads LNEEPDEESDEGSDEDV. Basic and acidic residues predominate over residues 698-725; that stretch reads EKSKDKKSSDKKSSDKKKSEKKSSDKKS. Over residues 726-749 the composition is skewed to basic residues; the sequence is SNKKNSKKKTYVKPKSSKKTSQKV. Composition is skewed to acidic residues over residues 765 to 774 and 782 to 804; these read DSDDLDDSDD and SDSD…ESEI. 2 stretches are compositionally biased toward basic residues: residues 809–821 and 828–841; these read KSKK…KKNK and TLKK…LIKV.

This Acanthamoeba polyphaga mimivirus (APMV) protein is Putative helicase R592.